Consider the following 253-residue polypeptide: Phosphate import ATP-binding protein PstB (253 aa).

An ABC transporter domain is found at 5–248; sequence IETVNLNVYY…PEHELTEKYV (244 aa). An ATP-binding site is contributed by 37–44; it reads GPSGCGKS.

Belongs to the ABC transporter superfamily. Phosphate importer (TC 3.A.1.7) family. As to quaternary structure, the complex is composed of two ATP-binding proteins (PstB), two transmembrane proteins (PstC and PstA) and a solute-binding protein (PstS).

It localises to the cell membrane. The enzyme catalyses phosphate(out) + ATP + H2O = ADP + 2 phosphate(in) + H(+). In terms of biological role, part of the ABC transporter complex PstSACB involved in phosphate import. Responsible for energy coupling to the transport system. The protein is Phosphate import ATP-binding protein PstB of Thermococcus kodakarensis (strain ATCC BAA-918 / JCM 12380 / KOD1) (Pyrococcus kodakaraensis (strain KOD1)).